The following is a 310-amino-acid chain: Vomeronasal type-1 receptor 90 (310 aa).

Residues 1-20 (MRRISTLYGVVDKQAIFFSE) are Extracellular-facing. Residues 21–41 (VVIGISFNSILFLFHIFQFLL) form a helical membrane-spanning segment. The Cytoplasmic segment spans residues 42–46 (ERRLR). The helical transmembrane segment at 47-67 (ITDLIISLLALIHLGMLTVMG) threads the bilayer. The Extracellular portion of the chain corresponds to 68-93 (FRAVDIFASQNVWNDIKCKSLAHLHR). Cysteine 85 and cysteine 172 form a disulfide bridge. A helical membrane pass occupies residues 94–114 (LLRGLSLCATCLLSIFQAITL). The Cytoplasmic portion of the chain corresponds to 115–135 (SPRSSCLAKFKYKSTQHSLCS). The chain crosses the membrane as a helical span at residues 136 to 156 (LLVLWAFYMSCGTHYSFTIVA). The Extracellular portion of the chain corresponds to 157 to 183 (DYNFSSRSLIFVTESCIILPMDYITRH). An N-linked (GlcNAc...) asparagine glycan is attached at asparagine 159. The chain crosses the membrane as a helical span at residues 184 to 204 (LFFILGIFRDVSFIGLMALSS). Over 205–238 (GYMVALLCRHRKQAQHLHRTSLSPKASPEQRATR) the chain is Cytoplasmic. Residues 239 to 259 (TILLLMSFFVLMYCLDCTISA) form a helical membrane-spanning segment. Topologically, residues 260–271 (SRLMHNGEPIHH) are extracellular. The helical transmembrane segment at 272-292 (SIQMMVSNSYATLSPLLLIVT) threads the bilayer. Topologically, residues 293 to 310 (ENRISRFLKSLLGRTVDA) are cytoplasmic.

It belongs to the G-protein coupled receptor 1 family. In terms of tissue distribution, expressed in 1-4% of neurons of the vomeronasal organ. Only one pheromone receptor gene may be expressed in a particular neuron. Not expressed in the main olfactory epithelium.

It is found in the cell membrane. Its function is as follows. Putative pheromone receptor implicated in the regulation of social as well as reproductive behavior. This Rattus norvegicus (Rat) protein is Vomeronasal type-1 receptor 90 (Vom1r90).